Here is a 483-residue protein sequence, read N- to C-terminus: Argininosuccinate lyase (483 aa).

This sequence belongs to the lyase 1 family. Argininosuccinate lyase subfamily.

It is found in the cytoplasm. The catalysed reaction is 2-(N(omega)-L-arginino)succinate = fumarate + L-arginine. The protein operates within amino-acid biosynthesis; L-arginine biosynthesis; L-arginine from L-ornithine and carbamoyl phosphate: step 3/3. The polypeptide is Argininosuccinate lyase (Albidiferax ferrireducens (strain ATCC BAA-621 / DSM 15236 / T118) (Rhodoferax ferrireducens)).